Here is a 407-residue protein sequence, read N- to C-terminus: Argininosuccinate synthase (407 aa).

ATP-binding positions include 11 to 19 and A38; that span reads AYSGGLDTS. L-citrulline contacts are provided by Y89 and S94. G119 lines the ATP pocket. L-aspartate contacts are provided by T121, N125, and D126. N125 is an L-citrulline binding site. L-citrulline-binding residues include R129, S180, S189, E265, and Y277.

This sequence belongs to the argininosuccinate synthase family. Type 1 subfamily. Homotetramer.

Its subcellular location is the cytoplasm. The catalysed reaction is L-citrulline + L-aspartate + ATP = 2-(N(omega)-L-arginino)succinate + AMP + diphosphate + H(+). It participates in amino-acid biosynthesis; L-arginine biosynthesis; L-arginine from L-ornithine and carbamoyl phosphate: step 2/3. The sequence is that of Argininosuccinate synthase from Magnetococcus marinus (strain ATCC BAA-1437 / JCM 17883 / MC-1).